Consider the following 910-residue polypeptide: Protein translocase subunit SecA (910 aa).

ATP is bound by residues glutamine 89, 107–111 (GEGKT), and aspartate 502. Residues cysteine 889, cysteine 891, cysteine 900, and histidine 901 each contribute to the Zn(2+) site.

This sequence belongs to the SecA family. In terms of assembly, monomer and homodimer. Part of the essential Sec protein translocation apparatus which comprises SecA, SecYEG and auxiliary proteins SecDF-YajC and YidC. Zn(2+) is required as a cofactor.

The protein localises to the cell inner membrane. The protein resides in the cytoplasm. The catalysed reaction is ATP + H2O + cellular proteinSide 1 = ADP + phosphate + cellular proteinSide 2.. In terms of biological role, part of the Sec protein translocase complex. Interacts with the SecYEG preprotein conducting channel. Has a central role in coupling the hydrolysis of ATP to the transfer of proteins into and across the cell membrane, serving both as a receptor for the preprotein-SecB complex and as an ATP-driven molecular motor driving the stepwise translocation of polypeptide chains across the membrane. In Bartonella bacilliformis (strain ATCC 35685 / KC583 / Herrer 020/F12,63), this protein is Protein translocase subunit SecA.